A 358-amino-acid chain; its full sequence is 3-dehydroquinate synthase (358 aa).

Residues 104 to 108 (GVIGD), 128 to 129 (TT), K140, K149, and 167 to 170 (FLNT) each bind NAD(+). Residues E182, H246, and H260 each coordinate Zn(2+).

It belongs to the sugar phosphate cyclases superfamily. Dehydroquinate synthase family. Requires Co(2+) as cofactor. It depends on Zn(2+) as a cofactor. NAD(+) is required as a cofactor.

It localises to the cytoplasm. It carries out the reaction 7-phospho-2-dehydro-3-deoxy-D-arabino-heptonate = 3-dehydroquinate + phosphate. The protein operates within metabolic intermediate biosynthesis; chorismate biosynthesis; chorismate from D-erythrose 4-phosphate and phosphoenolpyruvate: step 2/7. Functionally, catalyzes the conversion of 3-deoxy-D-arabino-heptulosonate 7-phosphate (DAHP) to dehydroquinate (DHQ). This Staphylococcus carnosus (strain TM300) protein is 3-dehydroquinate synthase.